A 2303-amino-acid polypeptide reads, in one-letter code: Adenomatous polyposis coli protein 2 (2303 aa).

Positions 8–59 (YEQLVRQVEALKAENSHLRQELRDNSSHLSKLETETSGMKEVLKHLQGKLEQ) form a coiled coil. Disordered stretches follow at residues 94–120 (PTLGPEPAARTPEGSPVHGSGPSKDSF) and 247–270 (VPVDEDPETEVPTHPEDGTPQPGN). ARM repeat units lie at residues 302 to 341 (PESCVAMRRSGCLPLLLQILHGTEAAAGGRAGAPGAPGAK), 479 to 518 (ANKATLCARRGCMEAIVAQLASDSEELHQVVSSILRNLSW), 522 to 562 (INSK…NLSA), 566 to 609 (ENKA…NVSS), 615 to 654 (EDYRQVLRDHNCLQTLLQHLTSHSLTIVSNACGTLWNLSA), and 657 to 696 (ARDQELLWDLGAVGMLRNLVHSKHKMIAMGSAAALRNLLA). Disordered regions lie at residues 744–764 (KQGPPAAEAATKKPLPPLRHL) and 816–835 (LARTPPTRRGGKEAEKDTSG). Positions 825–834 (GGKEAEKDTS) are enriched in basic and acidic residues. The stretch at 840-864 (AAKAKAKLALAVARIDQLVEDISAL) forms a coiled coil. Disordered regions lie at residues 867-908 (SSDD…AGSR), 953-986 (RREDPRCGQPRPSRLDLDLPGCQAEPPAREATSA), 1069-1152 (RCSS…ENYV), and 1173-1228 (SPSI…EATQ). Residues 869-878 (DDSFSLSSGD) are compositionally biased toward low complexity. The stretch at 1058–1077 (LAAQEGPLSLSRCSSLSSLS) is repeat 1. The segment at 1058-1587 (LAAQEGPLSL…SLSSSASSLS (530 aa)) is 5 X 20 AA approximate repeat of F-X-V-E-X-T-P-X-C-F-S-R-X-S-S-L-S-S-L-S. The segment at 1058-1587 (LAAQEGPLSL…SLSSSASSLS (530 aa)) is interaction with CTNNB1. Low complexity predominate over residues 1069 to 1084 (RCSSLSSLSSAGRPGP). Acidic residues predominate over residues 1088–1101 (GDLDDSDSSLEGLE). Positions 1143-1152 (TPSSSSENYV) are enriched in polar residues. Repeat 2 spans residues 1150–1169 (NYVQETPLVLSRCSSVSSLG). Positions 1173 to 1186 (SPSIASSIPSEPCS) are enriched in low complexity. Residues 1202–1212 (PGQTMPPSRSK) are compositionally biased toward polar residues. Residues 1263-1282 (FTVEKPDENFSCASSLSALA) form repeat 3. Disordered regions lie at residues 1307 to 1335 (GAGGAGLHFAGHRRREEGPAPTGSRPRGA), 1382 to 1497 (PAQE…QSLC), 1510 to 1684 (YGND…LDSV), 1724 to 2031 (LSVG…RGRP), and 2046 to 2232 (LRAA…DVDG). A compositionally biased stretch (polar residues) spans 1390–1410 (TDSAEGTPVNFSSAASLSDET). Copy 4 of the repeat occupies 1391–1410 (DSAEGTPVNFSSAASLSDET). Basic and acidic residues-rich tracts occupy residues 1477 to 1489 (ADKDGSKPGRTRG) and 1537 to 1548 (FTRERPQGRKEA). Residues 1568 to 1587 (LIADETPPCYSLSSSASSLS) form repeat 5. Low complexity predominate over residues 1578–1589 (SLSSSASSLSEP). A phosphoserine mark is found at Ser-1585 and Ser-1587. The segment covering 1638–1654 (PRRRPPVSGLRRRKPRA) has biased composition (basic residues). Basic and acidic residues-rich tracts occupy residues 1655–1671 (TRLDERPAEGSRERGEE) and 1739–1755 (RQAEGEMGSARRPEKRG). Positions 1819-1830 (APPCLAQPAAPA) are enriched in low complexity. The tract at residues 1821–1900 (PCLAQPAAPA…PPVTQAAGAL (80 aa)) is required for localization to microtubules and function in microtubule stabilization. Residues 1851-1860 (ELATLSQPPR) show a composition bias toward polar residues. Composition is skewed to low complexity over residues 1868 to 1886 (LAKTPSSSSSQTSPASQPL), 1971 to 1984 (GLVRVASALSSGSE), 2011 to 2026 (LSSAESAASAPQGASP), 2049 to 2062 (APRQGPAPARQRPP), and 2113 to 2123 (GAVPAAPASAD). The interval 2067-2144 (SPGERPARRT…PLPRVAAPGT (78 aa)) is interaction with MAPRE1 and MAPRE3. A compositionally biased stretch (basic and acidic residues) spans 2124-2135 (AARRSSDGEPRP). Residues 2200 to 2209 (KTNSSTSPSL) are compositionally biased toward polar residues.

Belongs to the adenomatous polyposis coli (APC) family. In terms of assembly, interacts with PSRC1. Interacts with APC. Interacts with CTNNB1. Interacts with MAPRE1 and MAPRE3. Interacts with TP53BP. Interacts possibly with AXIN2. Widely expressed (at protein level). Specifically expressed in the CNS.

The protein resides in the cytoplasm. The protein localises to the cytoskeleton. It localises to the golgi apparatus. It is found in the perinuclear region. In terms of biological role, stabilizes microtubules and may regulate actin fiber dynamics through the activation of Rho family GTPases. May also function in Wnt signaling by promoting the rapid degradation of CTNNB1. This Homo sapiens (Human) protein is Adenomatous polyposis coli protein 2.